A 1434-amino-acid polypeptide reads, in one-letter code: Probable ATP-dependent RNA helicase spindle-E (1434 aa).

Residues L125–V292 form the Helicase ATP-binding domain. G138 to T145 contributes to the ATP binding site. The DEAH box signature appears at D238–H241. In terms of domain architecture, Helicase C-terminal spans K339 to N526. The Tudor domain occupies A938–Q1001.

It belongs to the DEAD box helicase family. DEAH subfamily.

The protein resides in the cytoplasm. It catalyses the reaction ATP + H2O = ADP + phosphate + H(+). Probable ATP-binding RNA helicase which plays a central role during spermatogenesis and oogenesis by repressing transposable elements and preventing their mobilization, which is essential for the germline integrity. Acts via the piRNA metabolic process, which mediates the repression of transposable elements during meiosis by forming complexes composed of piRNAs and Piwi and govern the methylation and subsequent repression of transposons. Involved in the repression of LTR retrotransposon copia. Also involved in telomere regulation by repressing specialized telomeric retroelements HeT-A, TAHRE, and TART; Drosophila telomeres being maintained by transposition of specialized telomeric retroelements. Involved in telomeric trans-silencing, a repression mechanism by which a transposon or a transgene inserted in subtelomeric heterochromatin has the capacity to repress in trans in the female germline, a homologous transposon, or transgene located in euchromatin. Involved in the repression of testis-expressed Stellate genes by the homologous Su(Ste) repeats. Required for anteroposterior and dorsoventral axis formation during oogenesis. The polypeptide is Probable ATP-dependent RNA helicase spindle-E (spn-E) (Drosophila sechellia (Fruit fly)).